The sequence spans 193 residues: UPF0397 protein PA0141 (193 aa).

Transmembrane regions (helical) follow at residues 11–31 (VTIA…SIPI), 43–63 (FLVF…GLLG), 69–89 (FFLF…LGFL), 109–129 (ILFF…LIAP), and 147–167 (GFLV…FLMS).

This sequence belongs to the UPF0397 family.

Its subcellular location is the cell membrane. The polypeptide is UPF0397 protein PA0141 (Phytoplasma australiense).